The following is a 357-amino-acid chain: DNA replication and repair protein RecF (357 aa).

30–37 (GANGSGKT) is a binding site for ATP.

This sequence belongs to the RecF family.

It is found in the cytoplasm. In terms of biological role, the RecF protein is involved in DNA metabolism; it is required for DNA replication and normal SOS inducibility. RecF binds preferentially to single-stranded, linear DNA. It also seems to bind ATP. The chain is DNA replication and repair protein RecF from Escherichia coli O139:H28 (strain E24377A / ETEC).